Consider the following 156-residue polypeptide: Small ribosomal subunit protein uS7 (156 aa).

This sequence belongs to the universal ribosomal protein uS7 family. Part of the 30S ribosomal subunit. Contacts proteins S9 and S11.

Its function is as follows. One of the primary rRNA binding proteins, it binds directly to 16S rRNA where it nucleates assembly of the head domain of the 30S subunit. Is located at the subunit interface close to the decoding center, probably blocks exit of the E-site tRNA. The polypeptide is Small ribosomal subunit protein uS7 (Erythrobacter litoralis (strain HTCC2594)).